We begin with the raw amino-acid sequence, 104 residues long: MYAVVVTGGKQYKVAEGDVLFVEKLTADVDSTVELDNVLLVGKDNEETVVGKPMVEGAKVTAKVLAQGKAKKVVVFKYKPKKDYRKKQGHRQPYTKIQIEKINA.

Belongs to the bacterial ribosomal protein bL21 family. In terms of assembly, part of the 50S ribosomal subunit. Contacts protein L20.

Functionally, this protein binds to 23S rRNA in the presence of protein L20. In Clostridium botulinum (strain Kyoto / Type A2), this protein is Large ribosomal subunit protein bL21.